Consider the following 214-residue polypeptide: Thymidylate kinase (214 aa).

7 to 14 provides a ligand contact to ATP; it reads GIDGAGKS.

The protein belongs to the thymidylate kinase family.

It carries out the reaction dTMP + ATP = dTDP + ADP. Functionally, phosphorylation of dTMP to form dTDP in both de novo and salvage pathways of dTTP synthesis. The chain is Thymidylate kinase from Chlorobium luteolum (strain DSM 273 / BCRC 81028 / 2530) (Pelodictyon luteolum).